The sequence spans 557 residues: D-arabinono-1,4-lactone oxidase (557 aa).

The region spanning 26 to 209 (FFCKPQAIFQ…THVTLRTIPK (184 aa)) is the FAD-binding PCMH-type domain. His63 carries the pros-8alpha-FAD histidine modification.

Belongs to the oxygen-dependent FAD-linked oxidoreductase family. FAD is required as a cofactor.

It is found in the mitochondrion membrane. It carries out the reaction D-arabinono-1,4-lactone + O2 = dehydro-D-arabinono-1,4-lactone + H2O2 + H(+). The protein operates within cofactor biosynthesis; D-erythroascorbate biosynthesis; dehydro-D-arabinono-1,4-lactone from D-arabinose: step 2/2. The sequence is that of D-arabinono-1,4-lactone oxidase (ALO1) from Debaryomyces hansenii (strain ATCC 36239 / CBS 767 / BCRC 21394 / JCM 1990 / NBRC 0083 / IGC 2968) (Yeast).